The following is a 240-amino-acid chain: Keratinocyte-associated protein 3 (240 aa).

4 helical membrane-spanning segments follow: residues Val21 to Gly41, Val63 to Ser83, Leu95 to Leu115, and Ala163 to Tyr183.

It belongs to the TMEM54 family.

The protein localises to the membrane. The sequence is that of Keratinocyte-associated protein 3 (KRTCAP3) from Bos taurus (Bovine).